The following is a 352-amino-acid chain: Tubby-like F-box protein 10 (352 aa).

The segment covering 1–11 (MAAVREPREEA) has biased composition (basic and acidic residues). Residues 1–23 (MAAVREPREEAAVGEGEGEEEGR) form a disordered region. The region spanning 22–78 (GRWGGLLPELVEEVVRRVEASGGERWPARKDLVSCACVCRRWREAAAAVVRPLPESG) is the F-box domain.

It belongs to the TUB family. In terms of tissue distribution, ubiquitous.

In Oryza sativa subsp. japonica (Rice), this protein is Tubby-like F-box protein 10 (TULP10).